The chain runs to 439 residues: GTPase Obg (439 aa).

An Obg domain is found at Gly-3–Leu-162. One can recognise an OBG-type G domain in the interval Ala-163–Arg-333. Residues Gly-169 to Ser-176, Phe-194 to Gln-198, Asp-215 to Gly-218, Asn-285 to Asp-288, and Ser-314 to Ala-316 contribute to the GTP site. The Mg(2+) site is built by Ser-176 and Thr-196. One can recognise an OCT domain in the interval Val-351–Asp-428.

This sequence belongs to the TRAFAC class OBG-HflX-like GTPase superfamily. OBG GTPase family. As to quaternary structure, monomer. Mg(2+) is required as a cofactor.

It localises to the cytoplasm. An essential GTPase which binds GTP, GDP and possibly (p)ppGpp with moderate affinity, with high nucleotide exchange rates and a fairly low GTP hydrolysis rate. Plays a role in control of the cell cycle, stress response, ribosome biogenesis and in those bacteria that undergo differentiation, in morphogenesis control. This is GTPase Obg from Roseiflexus castenholzii (strain DSM 13941 / HLO8).